The primary structure comprises 1058 residues: Ubiquitin-like modifier-activating enzyme 1 (1058 aa).

The tract at residues 1 to 46 (MSSSPLSKKRRVSGPDPKPGSNCSPAQSALSEVSSVPTNGMAKNGS) is disordered. Ser-2 is subject to N-acetylserine. Residues Ser-4, Ser-13, Ser-21, Ser-24, and Ser-46 each carry the phosphoserine modification. A compositionally biased stretch (polar residues) spans 21–38 (SNCSPAQSALSEVSSVPT). Tyr-55 carries the post-translational modification Phosphotyrosine. A run of 2 repeats spans residues 63–199 (GHEA…GQLF) and 459–611 (GSDF…QVVI). The tract at residues 63-611 (GHEAMKMLQT…GTKGNVQVVI (549 aa)) is 2 approximate repeats. Residues Ala-478, Asp-504, Arg-515, Lys-528, and 576–577 (DN) each bind ATP. At Lys-528 the chain carries N6-succinyllysine. Cys-632 functions as the Glycyl thioester intermediate in the catalytic mechanism. Residue Lys-671 is modified to N6-acetyllysine. The residue at position 800 (Thr-800) is a Phosphothreonine. Ser-810, Ser-816, Ser-820, and Ser-835 each carry phosphoserine. Lys-980 is modified (N6-acetyllysine).

The protein belongs to the ubiquitin-activating E1 family. In terms of assembly, monomer. Interacts with GAN (via BTB domain). In terms of processing, ISGylated. In terms of tissue distribution, ubiquitously expressed. In testis, expressed in A spermatogonia and spermatids but at very low levels in pachytene spermatocytes.

It localises to the cytoplasm. The protein localises to the mitochondrion. Its subcellular location is the nucleus. The enzyme catalyses ATP + ubiquitin + [E1 ubiquitin-activating enzyme]-L-cysteine = AMP + diphosphate + S-ubiquitinyl-[E1 ubiquitin-activating enzyme]-L-cysteine.. Its pathway is protein modification; protein ubiquitination. Functionally, catalyzes the first step in ubiquitin conjugation to mark cellular proteins for degradation through the ubiquitin-proteasome system. Activates ubiquitin by first adenylating its C-terminal glycine residue with ATP, and thereafter linking this residue to the side chain of a cysteine residue in E1, yielding a ubiquitin-E1 thioester and free AMP. Essential for the formation of radiation-induced foci, timely DNA repair and for response to replication stress. Promotes the recruitment of TP53BP1 and BRCA1 at DNA damage sites. This chain is Ubiquitin-like modifier-activating enzyme 1 (Uba1), found in Mus musculus (Mouse).